A 598-amino-acid polypeptide reads, in one-letter code: Probable translation initiation factor IF-2 (598 aa).

The 223-residue stretch at Leu3–Lys225 folds into the tr-type G domain. Positions Gly12–Thr19 are G1. GTP is bound at residue Gly12–Thr19. A G2 region spans residues Gly37–His41. Residues Asp76–Gly79 are G3. Residues Asp76–His80 and Asn130–Asp133 each bind GTP. Positions Asn130–Asp133 are G4. Residues Ser200 to Met202 are G5.

The protein belongs to the TRAFAC class translation factor GTPase superfamily. Classic translation factor GTPase family. IF-2 subfamily.

Its function is as follows. Function in general translation initiation by promoting the binding of the formylmethionine-tRNA to ribosomes. Seems to function along with eIF-2. This chain is Probable translation initiation factor IF-2, found in Methanococcus maripaludis (strain C6 / ATCC BAA-1332).